Consider the following 427-residue polypeptide: Tumor necrosis factor receptor superfamily member 16 (427 aa).

The first 31 residues, 1–31, serve as a signal peptide directing secretion; the sequence is MRRAGAACSAMDRLRLLLLLLLLLGVSFGGA. The Extracellular portion of the chain corresponds to 32–254; the sequence is KETCSTGMYT…VVTRGTADNL (223 aa). 4 TNFR-Cys repeats span residues 34–67, 69–110, 111–149, and 151–191; these read TCST…QTVC, PCLD…DAVC, RCSY…NTVC, and ECPE…DAEC. Disulfide bonds link Cys35–Cys46, Cys47–Cys60, Cys50–Cys67, Cys70–Cys86, Cys89–Cys102, Cys92–Cys110, Cys112–Cys125, Cys128–Cys141, Cys131–Cys149, Cys152–Cys167, Cys170–Cys183, and Cys173–Cys191. Asn63 carries N-linked (GlcNAc...) asparagine glycosylation. The segment at 197 to 223 is disordered; that stretch reads RWITRSTPPEGSDVTTPSTQEPEAPPE. Positions 200-217 are enriched in polar residues; sequence TRSTPPEGSDVTTPSTQE. The chain crosses the membrane as a helical span at residues 255–275; the sequence is IPVYCSILAAVVVGLVAYIAF. The Cytoplasmic portion of the chain corresponds to 276 to 427; the sequence is KRWNSCKQNK…CSESTATSPV (152 aa). 2 stretches are compositionally biased toward polar residues: residues 284 to 294 and 308 to 329; these read NKQGANSRPVN and SGIS…TASG. Residues 284–334 form a disordered region; the sequence is NKQGANSRPVNQTPPPEGEKLHSDSGISVDSQSLHDQQTHTQTASGQALKG. Phosphoserine is present on Ser314. Residues 329-344 are mediates interaction with KIDINS220; the sequence is GQALKGDGNLYSSLPL. The 66-residue stretch at 356–421 folds into the Death domain; it reads GDTWRHLAGE…DIVESLCSES (66 aa).

As to quaternary structure, homodimer; disulfide-linked. Heterodimer with SORCS2. The extracellular domains of the heterodimer bind NGF. The cytoplasmic region of the heterodimer binds TRIO. NGF binding mediates dissociation of TRIO from the receptor complex. Interacts with TRAF2, TRAF4, TRAF6, PTPN13 and RANBP9. Interacts through TRAF6 with SQSTM1 which bridges NGFR to NTRK1. Interacts with BEX1. Interacts with BEX3. Interacts with KIDINS220 and NTRK1. Can form a ternary complex with NTRK1 and KIDINS220 and this complex is affected by the expression levels of KIDINS220. An increase in KIDINS220 expression leads to a decreased association of NGFR and NTRK1. Interacts (via death domain) with RAB31. Interacts with NTRK2; may regulate the ligand specificity of the NTRK2 receptor. Interacts with LINGO1. Interacts with NRADD. Interacts with MAGED1; the interaction antagonizes the association NGFR:NTRK1. Interacts with RTN4R. Interacts (via death domain) with ARHGDIA and RIPK2. Interacts with BFAR. (Microbial infection) Binds to rabies virus glycoprotein Gs. Post-translationally, N-glycosylated. O-glycosylated. In terms of processing, phosphorylated on serine residues. In terms of tissue distribution, detected in Schwann cells. Detected in embryonic brain, in hippocampus neurons (at protein level). Detected in brain and spinal cord.

Its subcellular location is the cell membrane. The protein resides in the cytoplasm. It is found in the perikaryon. It localises to the cell projection. The protein localises to the growth cone. Its subcellular location is the dendritic spine. Low affinity neurotrophin receptor which can bind to mature NGF, BDNF, NTF3, and NTF4. Forms a heterodimeric receptor with SORCS2 that binds the precursor forms of NGF (proNGF), BDNF (proBDNF) and NTF3 (proNT3) with high affinity, and has much lower affinity for mature NGF and BDNF. Plays an important role in differentiation and survival of specific neuronal populations during development. Can mediate cell survival as well as cell death of neural cells. The heterodimeric receptor formed with SORCS2 plays a role in proBDNF-dependent synaptic plasticity, in hippocampal long term depression (LTD) and long term potentiation (LTP). Plays a role in the inactivation of RHOA. Plays a role in the regulation of the translocation of GLUT4 to the cell surface in adipocytes and skeletal muscle cells in response to insulin, probably by regulating RAB31 activity, and thereby contributes to the regulation of insulin-dependent glucose uptake. Necessary for the circadian oscillation of the clock genes BMAL1, PER1, PER2 and NR1D1 in the suprachiasmatic nucleus (SCN) of the brain and in liver and of the genes involved in glucose and lipid metabolism in the liver. Its function is as follows. (Microbial infection) Cell surface receptor for rabies virus glycoprotein Gs. Functionally, does not bind NGF, BDNF, NTF3, and NTF4. This is Tumor necrosis factor receptor superfamily member 16 (Ngfr) from Mus musculus (Mouse).